The primary structure comprises 322 residues: MGLTTPAWNINNTVVNGSNNTEHFSCVSKFNTLNFLTVIIAMFGLAGNAIVLWLLAFHLPRNAFSVYVCNLACADFLQLCTQILGSLECFLQLNRRHTFFLTVVFMFAYLAGLCMIAAISVERSLSVMWPIWYHCQRPRHTSSIMCALLWAFCLLLNFLLGEGCGLLFSDPKYYFCITCALITTALIILLTVVPSVSSLALLVKMICGSHRIPVTRFYVTIALTLVVFIFLGLPFGIYSSFLIMFKEFQSIFSYHVLEVTIFLSCVNSCANPIIYFLVGSIRQHRLQWQSLKLLLQRAMQDTPEEDSGERVPSQRSGELESV.

Topologically, residues 1-34 (MGLTTPAWNINNTVVNGSNNTEHFSCVSKFNTLN) are extracellular. 3 N-linked (GlcNAc...) asparagine glycosylation sites follow: N11, N16, and N19. Residues 35–55 (FLTVIIAMFGLAGNAIVLWLL) traverse the membrane as a helical segment. Residues 56–70 (AFHLPRNAFSVYVCN) lie on the Cytoplasmic side of the membrane. A helical membrane pass occupies residues 71-91 (LACADFLQLCTQILGSLECFL). At 92 to 98 (QLNRRHT) the chain is on the extracellular side. A helical transmembrane segment spans residues 99–119 (FFLTVVFMFAYLAGLCMIAAI). Residues 120–147 (SVERSLSVMWPIWYHCQRPRHTSSIMCA) are Cytoplasmic-facing. Residues 148–168 (LLWAFCLLLNFLLGEGCGLLF) form a helical membrane-spanning segment. Residues 169 to 172 (SDPK) lie on the Extracellular side of the membrane. Residues 173–193 (YYFCITCALITTALIILLTVV) form a helical membrane-spanning segment. At 194–216 (PSVSSLALLVKMICGSHRIPVTR) the chain is on the cytoplasmic side. Residues 217 to 237 (FYVTIALTLVVFIFLGLPFGI) form a helical membrane-spanning segment. The Extracellular segment spans residues 238–260 (YSSFLIMFKEFQSIFSYHVLEVT). A helical transmembrane segment spans residues 261 to 281 (IFLSCVNSCANPIIYFLVGSI). The Cytoplasmic portion of the chain corresponds to 282-322 (RQHRLQWQSLKLLLQRAMQDTPEEDSGERVPSQRSGELESV). Residues 302–322 (TPEEDSGERVPSQRSGELESV) are disordered.

This sequence belongs to the G-protein coupled receptor 1 family. Mas subfamily.

It is found in the membrane. Its function is as follows. Orphan receptor. Probably involved in the function of nociceptive neurons. May regulate nociceptor function and/or development, including the sensation or modulation of pain. The protein is Mas-related G-protein coupled receptor member B5 (Mrgprb5) of Mus musculus (Mouse).